We begin with the raw amino-acid sequence, 568 residues long: Proline--tRNA ligase (568 aa).

Belongs to the class-II aminoacyl-tRNA synthetase family. ProS type 1 subfamily. Homodimer.

The protein resides in the cytoplasm. The enzyme catalyses tRNA(Pro) + L-proline + ATP = L-prolyl-tRNA(Pro) + AMP + diphosphate. Its function is as follows. Catalyzes the attachment of proline to tRNA(Pro) in a two-step reaction: proline is first activated by ATP to form Pro-AMP and then transferred to the acceptor end of tRNA(Pro). As ProRS can inadvertently accommodate and process non-cognate amino acids such as alanine and cysteine, to avoid such errors it has two additional distinct editing activities against alanine. One activity is designated as 'pretransfer' editing and involves the tRNA(Pro)-independent hydrolysis of activated Ala-AMP. The other activity is designated 'posttransfer' editing and involves deacylation of mischarged Ala-tRNA(Pro). The misacylated Cys-tRNA(Pro) is not edited by ProRS. The chain is Proline--tRNA ligase from Chlamydia pneumoniae (Chlamydophila pneumoniae).